The primary structure comprises 1791 residues: Sodium channel protein type 11 subunit alpha (1791 aa).

Residues 1-126 (MDDRCYPVIF…SIRSLAIRVS (126 aa)) lie on the Cytoplasmic side of the membrane. One copy of the I repeat lies at 115–408 (FNSIRSLAIR…VTMAYEEQNK (294 aa)). The chain crosses the membrane as a helical span at residues 127-148 (VHSLFSMFIIGTVIINCVFMAT). Residues 149-156 (GPAKNSNS) lie on the Extracellular side of the membrane. A helical membrane pass occupies residues 157 to 180 (NNTDIAECVFTGIYIFEALIKILA). Residues 181–192 (RGFILDEFSFLR) lie on the Cytoplasmic side of the membrane. A helical transmembrane segment spans residues 193–212 (DPWNWLDSIVIGIAIVSYIP). Over 213–219 (GITIKLL) the chain is Extracellular. The helical; Voltage-sensor transmembrane segment at 220 to 239 (PLRTFRVFRALKAISVVSRL) threads the bilayer. Over 240-255 (KVIVGALLRSVKKLVN) the chain is Cytoplasmic. Residues 256-269 (VIILTFFCLSIFAL) form a helical membrane-spanning segment. The Extracellular portion of the chain corresponds to 270–344 (VGQQLFMGSL…PDYNYTNFDN (75 aa)). Cys-283 and Cys-322 are joined by a disulfide. N-linked (GlcNAc...) asparagine glycosylation is found at Asn-290 and Asn-338. Residues 345–369 (FGWSFLAMFRLMTQDSWEKLYQQTL) constitute an intramembrane region (pore-forming). Residues 370-376 (RTTGLYS) are Extracellular-facing. A helical membrane pass occupies residues 377 to 402 (VFFFIVVIFLGSFYLINLTLAVVTMA). The Cytoplasmic portion of the chain corresponds to 403 to 572 (YEEQNKNVAA…WLCVKKVLRT (170 aa)). Residues 559–833 (CCPQWLCVKK…EGEARKTKVQ (275 aa)) form an II repeat. The chain crosses the membrane as a helical span at residues 573–596 (VMTDPFTELAITICIIINTVFLAM). The Extracellular segment spans residues 597–607 (EHHKMEASFEK). Residues 608–631 (MLNIGNLVFTSIFIAEMCLKIIAL) form a helical membrane-spanning segment. Over 632-639 (DPYHYFRR) the chain is Cytoplasmic. A helical membrane pass occupies residues 640 to 659 (GWNIFDSIVALLSFADVMNC). Residues 660–667 (VLQKRSWP) lie on the Extracellular side of the membrane. The chain crosses the membrane as a helical; Voltage-sensor span at residues 668-687 (FLRSFRVLRVFKLAKSWPTL). At 688-702 (NTLIKIIGNSVGALG) the chain is on the cytoplasmic side. A helical transmembrane segment spans residues 703-725 (SLTVVLVIVIFIFSVVGMQLFGR). Over 726–753 (SFNSQKSPKLCNPTGPTVSCLRHWHMGD) the chain is Extracellular. The pore-forming intramembrane region spans 754–774 (FWHSFLVVFRILCGEWIENMW). The Extracellular portion of the chain corresponds to 775-785 (ECMQEANASSS). A disulfide bond links Cys-776 and Cys-787. An N-linked (GlcNAc...) asparagine glycan is attached at Asn-781. The helical transmembrane segment at 786 to 811 (LCVIVFILITVIGKLVVLNLFIALLL) threads the bilayer. The Cytoplasmic segment spans residues 812–1051 (NSFSNEERNG…WWNLRKTCYQ (240 aa)). The III repeat unit spans residues 1044-1339 (NLRKTCYQIV…KKYYNAMKKL (296 aa)). Residues 1052 to 1074 (IVKHSWFESFIIFVILLSSGALI) traverse the membrane as a helical segment. Residues 1075–1088 (FEDVHLENQPKIQE) are Extracellular-facing. The helical transmembrane segment at 1089–1114 (LLNCTDIIFTHIFILEMVLKWVAFGF) threads the bilayer. Over 1115–1120 (GKYFTS) the chain is Cytoplasmic. Residues 1121–1138 (AWCCLDFIIVIVSVTTLI) traverse the membrane as a helical segment. Position 1139 (Asn-1139) is a topological domain, extracellular. The helical; Voltage-sensor transmembrane segment at 1140–1161 (LMELKSFRTLRALRPLRALSQF) threads the bilayer. Over 1162–1180 (EGMKVVVNALIGAIPAILN) the chain is Cytoplasmic. Residues 1181–1202 (VLLVCLIFWLVFCILGVYFFSG) form a helical membrane-spanning segment. At 1203–1243 (KFGKCINGTDSVINYTIITNKSQCESGNFSWINQKVNFDNV) the chain is on the extracellular side. 4 N-linked (GlcNAc...) asparagine glycosylation sites follow: Asn-1209, Asn-1216, Asn-1222, and Asn-1230. An intramembrane region (pore-forming) is located at residues 1244-1265 (GNAYLALLQVATFKGWMDIIYA). At 1266-1281 (AVDSTEKEQQPEFESN) the chain is on the extracellular side. Residues 1282-1308 (SLGYIYFVVFIIFGSFFTLNLFIGVII) form a helical membrane-spanning segment. Over 1309–1361 (DNFNQQQKKLGGQDIFMTEEQKKYYNAMKKLGSKKPQKPIPRPLNKCQGLVFD) the chain is Cytoplasmic. An IV repeat occupies 1348 to 1639 (IPRPLNKCQG…WEKFDPEATQ (292 aa)). The helical transmembrane segment at 1362–1385 (IVTSQIFDIIIISLIILNMISMMA) threads the bilayer. Topologically, residues 1386–1396 (ESYNQPKAMKS) are extracellular. The chain crosses the membrane as a helical span at residues 1397–1420 (ILDHLNWVFVVIFTLECLIKIFAL). The Cytoplasmic segment spans residues 1421–1426 (RQYYFT). The helical transmembrane segment at 1427-1450 (NGWNLFDCVVVLLSIVSTMISTLE) threads the bilayer. The Extracellular segment spans residues 1451 to 1461 (NQEHIPFPPTL). Residues 1462-1484 (FRIVRLARIGRILRLVRAARGIR) traverse the membrane as a helical; Voltage-sensor segment. The Cytoplasmic segment spans residues 1485-1499 (TLLFALMMSLPSLFN). The chain crosses the membrane as a helical span at residues 1500–1522 (IGLLLFLIMFIYAILGMNWFSKV). Residues 1523-1536 (NPESGIDDIFNFKT) are Extracellular-facing. Positions 1537–1559 (FASSMLCLFQISTSAGWDSLLSP) form an intramembrane region, pore-forming. Over 1560–1579 (MLRSKESCNSSSENCHLPGI) the chain is Extracellular. Asn-1568 carries an N-linked (GlcNAc...) asparagine glycan. Residues 1580–1604 (ATSYFVSYIIISFLIVVNMYIAVIL) traverse the membrane as a helical segment. Over 1605–1791 (ENFNTATEES…GVAKGKVHCD (187 aa)) the chain is Cytoplasmic.

It belongs to the sodium channel (TC 1.A.1.10) family. Nav1.9/SCN11A subfamily. In terms of assembly, the voltage-resistant sodium channel consists of an ion conducting pore forming alpha-subunit regulated by one or more auxiliary subunits SCN1B, SCN2B and SCN3B. As to expression, expressed in the dorsal root ganglia and trigeminal ganglia, olfactory bulb, hippocampus, cerebellar cortex, spinal cord, spleen, small intestine and placenta.

It localises to the cell membrane. It catalyses the reaction Na(+)(in) = Na(+)(out). With respect to regulation, activity is not sensitive to inhibition by tetrodotoxin. Functionally, sodium channel mediating the voltage-dependent sodium ion permeability of excitable membranes. Assuming opened or closed conformations in response to the voltage difference across the membrane, the protein forms a sodium-selective channel through which sodium ions may pass in accordance with their electrochemical gradient. Involved in membrane depolarization during action potential in nociceptors which function as key relay stations for the electrical transmission of pain signals from the periphery to the central nervous system. Also involved in rapid BDNF-evoked neuronal depolarization. The protein is Sodium channel protein type 11 subunit alpha of Homo sapiens (Human).